Here is a 202-residue protein sequence, read N- to C-terminus: Imidazoleglycerol-phosphate dehydratase (202 aa).

Belongs to the imidazoleglycerol-phosphate dehydratase family.

It localises to the cytoplasm. The catalysed reaction is D-erythro-1-(imidazol-4-yl)glycerol 3-phosphate = 3-(imidazol-4-yl)-2-oxopropyl phosphate + H2O. It functions in the pathway amino-acid biosynthesis; L-histidine biosynthesis; L-histidine from 5-phospho-alpha-D-ribose 1-diphosphate: step 6/9. This Acinetobacter baumannii (strain SDF) protein is Imidazoleglycerol-phosphate dehydratase.